Here is a 130-residue protein sequence, read N- to C-terminus: Small ribosomal subunit protein uS8 (130 aa).

Belongs to the universal ribosomal protein uS8 family. In terms of assembly, part of the 30S ribosomal subunit. Contacts proteins S5 and S12.

Functionally, one of the primary rRNA binding proteins, it binds directly to 16S rRNA central domain where it helps coordinate assembly of the platform of the 30S subunit. The protein is Small ribosomal subunit protein uS8 of Idiomarina loihiensis (strain ATCC BAA-735 / DSM 15497 / L2-TR).